Here is a 254-residue protein sequence, read N- to C-terminus: Mediator of RNA polymerase II transcription subunit 6 (254 aa).

The segment at 190-254 (PTFYQTKPGE…PPPEKRARVQ (65 aa)) is disordered. Positions 227–245 (PPAPPAPPRPPPQTTPNKP) are enriched in pro residues.

This sequence belongs to the Mediator complex subunit 6 family. Component of the Mediator complex.

The protein resides in the nucleus. Functionally, component of the Mediator complex, a coactivator involved in the regulated transcription of nearly all RNA polymerase II-dependent genes. Mediator functions as a bridge to convey information from gene-specific regulatory proteins to the basal RNA polymerase II transcription machinery. Mediator is recruited to promoters by direct interactions with regulatory proteins and serves as a scaffold for the assembly of a functional preinitiation complex with RNA polymerase II and the general transcription factors. This chain is Mediator of RNA polymerase II transcription subunit 6 (med6), found in Danio rerio (Zebrafish).